Consider the following 108-residue polypeptide: Nucleoid-associated protein CHAB381_0200 (108 aa).

It belongs to the YbaB/EbfC family. Homodimer.

The protein resides in the cytoplasm. It is found in the nucleoid. Its function is as follows. Binds to DNA and alters its conformation. May be involved in regulation of gene expression, nucleoid organization and DNA protection. This chain is Nucleoid-associated protein CHAB381_0200, found in Campylobacter hominis (strain ATCC BAA-381 / DSM 21671 / CCUG 45161 / LMG 19568 / NCTC 13146 / CH001A).